Consider the following 127-residue polypeptide: Large ribosomal subunit protein bL17 (127 aa).

Belongs to the bacterial ribosomal protein bL17 family. In terms of assembly, part of the 50S ribosomal subunit. Contacts protein L32.

The polypeptide is Large ribosomal subunit protein bL17 (Xanthomonas euvesicatoria pv. vesicatoria (strain 85-10) (Xanthomonas campestris pv. vesicatoria)).